We begin with the raw amino-acid sequence, 60 residues long: Pepsin-3 (60 aa).

The propeptide at 1 to 35 (INVPLTRHKSMRESLREKGIELPYQDPAIKYRPEF) is activation peptide.

Belongs to the peptidase A1 family.

The chain is Pepsin-3 from Thunnus orientalis (North Pacific bluefin tuna).